The sequence spans 154 residues: Superoxide dismutase [Cu-Zn] (154 aa).

His-47, His-49, and His-64 together coordinate Cu cation. Residues Cys-58 and Cys-147 are joined by a disulfide bond. Residues His-64, His-72, His-81, and Asp-84 each coordinate Zn(2+). Position 121 (His-121) interacts with Cu cation. Residues 124–137 (TDDLGRGDSEESKK) show a composition bias toward basic and acidic residues. Residues 124–144 (TDDLGRGDSEESKKTGNAGAR) are disordered. Arg-144 is a substrate binding site.

The protein belongs to the Cu-Zn superoxide dismutase family. In terms of assembly, homodimer. Cu cation serves as cofactor. Zn(2+) is required as a cofactor.

It localises to the cytoplasm. The enzyme catalyses 2 superoxide + 2 H(+) = H2O2 + O2. Its function is as follows. Destroys radicals which are normally produced within the cells and which are toxic to biological systems. This chain is Superoxide dismutase [Cu-Zn] (sodA), found in Emericella nidulans (strain FGSC A4 / ATCC 38163 / CBS 112.46 / NRRL 194 / M139) (Aspergillus nidulans).